A 972-amino-acid polypeptide reads, in one-letter code: FHF complex subunit HOOK-interacting protein 1B (972 aa).

2 disordered regions span residues 465–548 (APSP…GELE) and 573–644 (SAPY…SWPE). Ser-467 bears the Phosphoserine mark. Over residues 478–501 (RGPGSPSVDSSSVTTVPRPSTPSR) the composition is skewed to low complexity. A phosphoserine mark is found at Ser-510, Ser-523, Ser-529, and Ser-533. The span at 523-535 (SPGLSASPASSPG) shows a compositional bias: low complexity. Phosphoserine occurs at positions 859 and 897.

It belongs to the FHIP family. In terms of assembly, component of the FTS/Hook/FHIP complex (FHF complex), composed of AKTIP/FTS, FHIP1B, and one or more members of the Hook family of proteins HOOK1, HOOK2, and HOOK3. The FHF complex associates with the homotypic vesicular sorting complex (the HOPS complex).

Component of the FTS/Hook/FHIP complex (FHF complex). The FHF complex may function to promote vesicle trafficking and/or fusion via the homotypic vesicular protein sorting complex (the HOPS complex). FHF complex promotes the distribution of AP-4 complex to the perinuclear area of the cell. In Homo sapiens (Human), this protein is FHF complex subunit HOOK-interacting protein 1B.